We begin with the raw amino-acid sequence, 838 residues long: Shutoff protein (838 aa).

The tract at residues 1–102 (MEDQHSAASE…EQEEDSPDRY (102 aa)) is disordered. Over residues 18–35 (TLPPPPPPPPPPTSPPPS) the composition is skewed to pro residues. Residues 52–65 (TCSSSSSSSASSEC) show a composition bias toward low complexity. The segment at 291-353 (LMQTLLVRRA…ACMVTVQLHC (63 aa)) is binding to host EIF4G. Residues 356–474 (TFLTSREMVR…SLWTGFDERT (119 aa)) enclose the RRM domain. A phosphotyrosine; by host mark is found at Y373 and Y690. Positions 693 to 838 (PHTGEELNTA…QELRRPQRGS (146 aa)) are disordered. Low complexity predominate over residues 701–710 (TAAPSTAHHA). 2 stretches are compositionally biased toward basic and acidic residues: residues 737–746 (SYADRVRSEL) and 770–787 (HSRD…DQRQ). Residues 813–829 (QALLHQQQQQQEHQPAQ) are compositionally biased toward low complexity.

This sequence belongs to the adenoviridae shutoff protein family. Monomer. Interacts with hexon protein; this interaction allows chaperoning and trimerization of hexon proteins. Interacts (via N-terminus) with host initiation factor EIF4G (via C-terminus). Interacts (via RRM domain) with viral mRNAs that contain the tripartite leader; this interaction allows ribosome shunting and expression of viral late mRNAs. Post-translationally, might be cleaved by the viral protease. Phosphorylated. Tyrosine phosphorylation enhances preferential binding to tripartite leader mRNAs and allows ribosome shunting. In terms of processing, methylated. Asymmetric dimethylation by host PRMT1 of the Arg/Gly-rich region may regulate shutoff protein binding to hexon and promote the capsid assembly in the nucleus.

Its subcellular location is the host cytoplasm. Functionally, protein that inhibits host translation while promoting late viral translation by ribosome shunting. Blocks host cap-dependent translation by binding to eIF4G, displacing MKNK1 from cap initiation complexes and preventing EIF4E phosphorylation. Binds to the tripartite leader sequence of viral late mRNAs and recruits host eIF4G, PABPC1/poly-A binding protein and 40S ribosomes subunits on viral mRNAs, allowing ribosome shunting and efficient translation of late viral mRNAs even though conventional translation via ribosome scanning from the cap has been shut off in the host cell. During assembly, acts as a chaperone protein that helps hexon proteins assembly into trimers. This Porcine adenovirus A serotype 3 (PAdV-3) protein is Shutoff protein.